The following is a 106-amino-acid chain: Ribosomal processing cysteine protease Prp (106 aa).

Residue H22 is the Proton donor of the active site. Residue C34 is the Nucleophile of the active site.

The protein belongs to the Prp family. As to quaternary structure, homodimer. A mutant protein unable to cleave bL27 copurifies with its substrate.

Not inhibited by short peptide analogs; a 6-mer inhibits only 20% while a 13-mer inhibits 63%. Inhibited by Ac-KLNLQFF-CH(2) which binds covalantly to Cys-34. Inhibited by mersalyl acid (C13H18HgNO6). An essential cysteine protease that cleaves the N-terminal 9 amino acids from ribosomal protein bL27. Also acts as an N-terminal protease on the major capsid and scaffold assembly proteins of bacteriophage 80alpha. Cleavage of the N-terminus of bL27 (and thus this enzyme) is essential for growth; it cannot be replaced by a 'pre-cleaved' or non-cleavable form of bL27. Might serve a chaperone function during ribosome assembly. The chain is Ribosomal processing cysteine protease Prp from Staphylococcus aureus (strain NCTC 8325 / PS 47).